We begin with the raw amino-acid sequence, 298 residues long: Cholesterol 25-hydroxylase (298 aa).

The N-linked (GlcNAc...) asparagine glycan is linked to Asn-5. Helical transmembrane passes span 38–58 (IFPV…FVVL), 88–108 (LGLT…LHWV), and 124–144 (LLSH…AWHL). The Fatty acid hydroxylase domain occupies 128–263 (VLICLLLFDT…FTHWDKMLGT (136 aa)). A Histidine box-1 motif is present at residues 142-146 (WHLLH). A Histidine box-2 motif is present at residues 157–161 (HKVHH). The N-linked (GlcNAc...) asparagine glycan is linked to Asn-163. The short motif at 238–244 (HHDMHHS) is the Histidine box-3 element.

Belongs to the sterol desaturase family. Fe cation serves as cofactor. N-glycosylated. In terms of tissue distribution, widely expressed at low level and at higher level in the lung. Weakly expressed in the heart, lung and kidney.

It is found in the endoplasmic reticulum membrane. The catalysed reaction is cholesterol + AH2 + O2 = 25-hydroxycholesterol + A + H2O. The enzyme catalyses cholesterol + NADPH + O2 + H(+) = 25-hydroxycholesterol + NADP(+) + H2O. Functionally, catalyzes the formation of 25-hydroxycholesterol from cholesterol, leading to repress cholesterol biosynthetic enzymes. Plays a key role in cell positioning and movement in lymphoid tissues: 25-hydroxycholesterol is an intermediate in biosynthesis of 7-alpha,25-dihydroxycholesterol (7-alpha,25-OHC), an oxysterol that acts as a ligand for the G protein-coupled receptor GPR183/EBI2, a chemotactic receptor for a number of lymphoid cells. May play an important role in regulating lipid metabolism by synthesizing a corepressor that blocks sterol regulatory element binding protein (SREBP) processing. In testis, production of 25-hydroxycholesterol by macrophages may play a role in Leydig cell differentiation. Required to restrain inflammation in macrophages: production of 25-hydroxycholesterol protects macrophages from cholesterol overload, thereby preventing mitochondrial DNA release and subsequent activation of the AIM2 inflammasome. Interferon-stimulated gene which has broad antiviral activities against a wide range of enveloped viruses. The polypeptide is Cholesterol 25-hydroxylase (Mus musculus (Mouse)).